The following is an 85-amino-acid chain: Conotoxin Lt28.7 (85 aa).

The first 21 residues, 1-21 (MPKLEMMLLVLLILPLCYIDA), serve as a signal peptide directing secretion. The propeptide occupies 22 to 40 (VGPPPPWNMEDEIIEHWQE).

Belongs to the conotoxin D superfamily. Post-translationally, contains 5 disulfide bonds. Expressed by the venom duct.

It is found in the secreted. Functionally, probable neurotoxin. This is Conotoxin Lt28.7 from Conus litteratus (Lettered cone).